Here is a 239-residue protein sequence, read N- to C-terminus: Putative transcriptional regulator of 2-aminoethylphosphonate degradation operons (239 aa).

The 69-residue stretch at 8–76 (IPQYLLIKAQ…DRRGWFVTPE (69 aa)) folds into the HTH gntR-type domain. The H-T-H motif DNA-binding region spans 36-55 (ERELCAIFNTTRITIRESLA).

The chain is Putative transcriptional regulator of 2-aminoethylphosphonate degradation operons (phnR) from Salmonella paratyphi A (strain ATCC 9150 / SARB42).